The primary structure comprises 472 residues: Ribulose bisphosphate carboxylase/oxygenase activase, chloroplastic (472 aa).

The N-terminal 58 residues, 1–58 (MATAVSTVGAATRAPLNLNGSSAGASVPTSGFLGSSLKKHTNVRFPSSSRTTSMTVKA), are a transit peptide targeting the chloroplast. Residue 163–170 (GGKGQGKS) participates in ATP binding. A disordered region spans residues 448–472 (GCTDPEAKNYDPTARSDDGSCTYNL). The span at 452–465 (PEAKNYDPTARSDD) shows a compositional bias: basic and acidic residues.

It belongs to the RuBisCO activase family.

It is found in the plastid. It localises to the chloroplast stroma. Functionally, activation of RuBisCO (ribulose-1,5-bisphosphate carboxylase/oxygenase; EC 4.1.1.39) involves the ATP-dependent carboxylation of the epsilon-amino group of lysine leading to a carbamate structure. In Spinacia oleracea (Spinach), this protein is Ribulose bisphosphate carboxylase/oxygenase activase, chloroplastic.